The primary structure comprises 327 residues: Putative HTH-type transcriptional regulatory protein MM_0444 (327 aa).

An HTH cro/C1-type domain is found at 132–190 (LKKARTTQSMSLGTLASMVGVSRRTISKYEEEGMDASIDVVLHLEDIFGVELAKPIDIL). Residues 143–162 (LGTLASMVGVSRRTISKYEE) constitute a DNA-binding region (H-T-H motif). The interval 195 to 214 (SRKPRKKAEPEKEEPKGKPG) is disordered. Over residues 201–211 (KAEPEKEEPKG) the composition is skewed to basic and acidic residues.

This Methanosarcina mazei (strain ATCC BAA-159 / DSM 3647 / Goe1 / Go1 / JCM 11833 / OCM 88) (Methanosarcina frisia) protein is Putative HTH-type transcriptional regulatory protein MM_0444.